A 380-amino-acid chain; its full sequence is Cytochrome b (380 aa).

A run of 4 helical transmembrane segments spans residues 34-54 (FGSLLGICLMTQILTGLLLAM), 78-99 (WLIRNLHANGASFFFICIYLHI), 114-134 (WNTGILLLLTLMATAFVGYVL), and 179-199 (FFALHFLLPFMIAGLTLIHLT). The heme b site is built by His84 and His98. 2 residues coordinate heme b: His183 and His197. A ubiquinone is bound at residue His202. Transmembrane regions (helical) follow at residues 227–247 (LKDILGFTLMFLPLTALALFS), 289–309 (LGGVLALAASVLVLFLSPLLH), 321–341 (LSQLLFWLLVTNLFILTWIGS), and 348–368 (FIIIGQLASITYFTILLVLFP).

The protein belongs to the cytochrome b family. In terms of assembly, the cytochrome bc1 complex contains 11 subunits: 3 respiratory subunits (MT-CYB, CYC1 and UQCRFS1), 2 core proteins (UQCRC1 and UQCRC2) and 6 low-molecular weight proteins (UQCRH/QCR6, UQCRB/QCR7, UQCRQ/QCR8, UQCR10/QCR9, UQCR11/QCR10 and a cleavage product of UQCRFS1). This cytochrome bc1 complex then forms a dimer. Heme b serves as cofactor.

It localises to the mitochondrion inner membrane. Component of the ubiquinol-cytochrome c reductase complex (complex III or cytochrome b-c1 complex) that is part of the mitochondrial respiratory chain. The b-c1 complex mediates electron transfer from ubiquinol to cytochrome c. Contributes to the generation of a proton gradient across the mitochondrial membrane that is then used for ATP synthesis. This is Cytochrome b (MT-CYB) from Thalassarche impavida (Albatross).